Consider the following 354-residue polypeptide: CX3C chemokine receptor 1 (354 aa).

The Extracellular portion of the chain corresponds to 1–32; that stretch reads MSTSFPELDLENFEYDDSAEACYLGDIVAFGT. The helical transmembrane segment at 33 to 60 threads the bilayer; it reads IFLSVFYALVFTFGLVGNLLVVLALTNS. The Cytoplasmic segment spans residues 61–70; it reads RKPKSITDIY. The helical transmembrane segment at 71–91 threads the bilayer; that stretch reads LLNLALSDLLFVATLPFWTHY. Residues 92 to 104 are Extracellular-facing; that stretch reads LISHEGLHNAMCK. Cys103 and Cys176 are oxidised to a cystine. The chain crosses the membrane as a helical span at residues 105-126; it reads LTTAFFFIGFFGGIFFITVISI. Over 127–143 the chain is Cytoplasmic; it reads DRYLAIVLAANSMNNRT. The helical transmembrane segment at 144 to 168 threads the bilayer; it reads VQHGVTISLGVWAAAILVASPQFMF. Residues 169–196 are Extracellular-facing; it reads TKRKDNECLGDYPEVLQEMWPVLRNSEV. A helical transmembrane segment spans residues 197–216; sequence NILGFALPLLIMSFCYFRII. Residues 217 to 232 are Cytoplasmic-facing; it reads QTLFSCKNRKKARAVR. The chain crosses the membrane as a helical span at residues 233-257; sequence LILLVVFAFFLFWTPYNIMIFLETL. Residues 258-274 are Extracellular-facing; that stretch reads KFYNFFPSCDMKRDLRL. A helical membrane pass occupies residues 275–298; that stretch reads ALSVTETVAFSHCCLNPFIYAFAG. Topologically, residues 299 to 354 are cytoplasmic; sequence EKFRRYLGHLYRKCLAVLCGHPVHTGFSPESQRSRQDSILSSFTHYTSEGDGSLLL. Thr345 bears the Phosphothreonine mark.

It belongs to the G-protein coupled receptor 1 family. Found in a ternary complex with CX3CL1 and ITGAV:ITGB3 or ITGA4:ITGB1. In terms of processing, this protein is not N-glycosylated which is unusual for G-protein-coupled receptors. As to expression, specifically expressed in subsets of leukocytes: expressed in monocytes, subsets of T-cells and natural killer (NK) cells in the circulation, dendritic cells, as well as in microglia in the central nervous system (CNS). Expression level subdivides blood monocytes into two major functional subsets; CD14(+)CD16(-)-CX3CR1(low) inflammatory monocytes and CD14(low)CD16(+)CX3CR1(high) homeostatic monocytes. Expressed in myeloid-derived mucosal dendritic cells, which populate the entire lamina propria of the small intestine.

The protein resides in the cell membrane. Functionally, receptor for the C-X3-C chemokine fractalkine (CX3CL1) present on many early leukocyte cells; CX3CR1-CX3CL1 signaling exerts distinct functions in different tissue compartments, such as immune response, inflammation, cell adhesion and chemotaxis. CX3CR1-CX3CL1 signaling mediates cell migratory functions. Responsible for the recruitment of natural killer (NK) cells to inflamed tissues. Acts as a regulator of inflammation process leading to atherogenesis by mediating macrophage and monocyte recruitment to inflamed atherosclerotic plaques, promoting cell survival. Involved in airway inflammation by promoting interleukin 2-producing T helper (Th2) cell survival in inflamed lung. Involved in the migration of circulating monocytes to non-inflamed tissues, where they differentiate into macrophages and dendritic cells. Acts as a negative regulator of angiogenesis, probably by promoting macrophage chemotaxis. Plays a key role in brain microglia by regulating inflammatory response in the central nervous system (CNS) and regulating synapse maturation. Required to restrain the microglial inflammatory response in the CNS and the resulting parenchymal damage in response to pathological stimuli. Involved in brain development by participating in synaptic pruning, a natural process during which brain microglia eliminates extra synapses during postnatal development. Synaptic pruning by microglia is required to promote the maturation of circuit connectivity during brain development. Acts as an important regulator of the gut microbiota by controlling immunity to intestinal bacteria and fungi. Expressed in lamina propria dendritic cells in the small intestine, which form transepithelial dendrites capable of taking up bacteria in order to provide defense against pathogenic bacteria. Required to initiate innate and adaptive immune responses against dissemination of commensal fungi (mycobiota) component of the gut: expressed in mononuclear phagocytes (MNPs) and acts by promoting induction of antifungal IgG antibodies response to confer protection against disseminated C.albicans or C.auris infection. Also acts as a receptor for C-C motif chemokine CCL26, inducing cell chemotaxis. The polypeptide is CX3C chemokine receptor 1 (Mus musculus (Mouse)).